A 543-amino-acid polypeptide reads, in one-letter code: Cytochrome P450 307a1 (543 aa).

A Phosphoserine modification is found at Ser219. The tract at residues 440–460 (FLEPSKEQSPKNSKGSDSGIE) is disordered. A compositionally biased stretch (polar residues) spans 449 to 460 (PKNSKGSDSGIE). Cys485 serves as a coordination point for heme.

Belongs to the cytochrome P450 family. It depends on heme as a cofactor.

It is found in the endoplasmic reticulum membrane. The protein resides in the microsome membrane. Its function is as follows. Required for correct development of the embryonic midline glial cells which are necessary for the formation of distinct segmental commissures. The chain is Cytochrome P450 307a1 (spo) from Drosophila melanogaster (Fruit fly).